The primary structure comprises 354 residues: Biotin synthase (354 aa).

Residues 64-282 (GDVELATLLS…IAVARITMPR (219 aa)) form the Radical SAM core domain. The [4Fe-4S] cluster site is built by cysteine 79, cysteine 83, and cysteine 86. Cysteine 123, cysteine 154, cysteine 214, and arginine 286 together coordinate [2Fe-2S] cluster.

This sequence belongs to the radical SAM superfamily. Biotin synthase family. Homodimer. The cofactor is [4Fe-4S] cluster. It depends on [2Fe-2S] cluster as a cofactor.

It carries out the reaction (4R,5S)-dethiobiotin + (sulfur carrier)-SH + 2 reduced [2Fe-2S]-[ferredoxin] + 2 S-adenosyl-L-methionine = (sulfur carrier)-H + biotin + 2 5'-deoxyadenosine + 2 L-methionine + 2 oxidized [2Fe-2S]-[ferredoxin]. The protein operates within cofactor biosynthesis; biotin biosynthesis; biotin from 7,8-diaminononanoate: step 2/2. Functionally, catalyzes the conversion of dethiobiotin (DTB) to biotin by the insertion of a sulfur atom into dethiobiotin via a radical-based mechanism. This Paracidovorax citrulli (strain AAC00-1) (Acidovorax citrulli) protein is Biotin synthase.